The following is a 246-amino-acid chain: Putative outer membrane protein YiaT (246 aa).

Positions 1–21 are cleaved as a signal peptide; sequence MLINRNIVALFALPFMASATA.

Belongs to the MipA/OmpV family.

The protein localises to the cell outer membrane. The chain is Putative outer membrane protein YiaT (yiaT) from Escherichia coli (strain K12).